The following is a 66-amino-acid chain: Heat-stable enterotoxin (66 aa).

The signal sequence occupies residues 1-19 (MKKIVFVLVLMLSSFGTFG). The propeptide occupies 20-50 (QETASRQFGDAFSTPIAAEVNKKACDTELPP). 3 cysteine pairs are disulfide-bonded: cysteine 54–cysteine 59, cysteine 55–cysteine 63, and cysteine 58–cysteine 66.

The protein belongs to the heat-stable enterotoxin family.

The protein localises to the secreted. Its function is as follows. Toxin which activates the particulate form of guanylate cyclase and increases cyclic GMP levels within the host intestinal epithelial cells. In Yersinia kristensenii, this protein is Heat-stable enterotoxin (yst).